Consider the following 789-residue polypeptide: Tax1-binding protein 1 (789 aa).

3 positions are modified to phosphoserine: serine 124, serine 138, and serine 225. Residues 144 to 599 (TTKAGLLELK…LKRSLENPAE (456 aa)) are a coiled coil. Residues 320–420 (EEIGRLQLCL…ELKLNAMKKD (101 aa)) form an oligomerization region. Positions 481–502 (TGNQQKVNDASVNTDPATSAST) are enriched in polar residues. Residues 481 to 508 (TGNQQKVNDASVNTDPATSASTVDVKPS) form a disordered region. Residue serine 593 is modified to Phosphoserine; by IKKA. Serine 609 is subject to Phosphoserine. The tract at residues 639 to 660 (YASQETRDGADGAFYPDEIQRP) is disordered. At serine 666 the chain carries Phosphoserine; by IKKA. The disordered stretch occupies residues 678-712 (PARNFSRPDGLEDSEDSKEDENVPTAPDPPSQHLR). UBZ1-type zinc fingers lie at residues 727-753 (HKKC…VESH) and 754-780 (WKVC…VQTH). Residues cysteine 730, cysteine 733, histidine 749, histidine 753, cysteine 757, cysteine 760, histidine 776, and histidine 780 each coordinate Zn(2+).

Homooligomer. Interacts with TNFAIP3. Interacts with STARD13. Interacts with MYO6. Interacts with TOM1; the interaction is indirect and is mediated by MYO6, which acts as a bridge between TOM1 and TAX1BP1. Interacts with MAVS; this interaction induces MAVS polyubiquitination. Interacts with TNIP1. Interacts with TRAF6; this interaction mediates deubiquitination of TRAF6 and inhibition of NF-kappa-B activation. Interacts with RIPK1; this interaction negatively regulates RIPK1 ubiquitination. Interacts with NBR1. Interacts with TBK1. Interacts with RB1CC1. Interacts with SQSTM1. Interacts with AZI2. Interacts with TICAM1 and TRIM32; these interactions target TICAM1 to TAX1BP1-mediated selective autophagic degradation. As to quaternary structure, (Microbial infection) Interacts with the HTLV-1 protein Tax. In terms of assembly, (Microbial infection) Interacts with Respiratory syncytial virus protein N; this interaction may promote viral growth by inhibiting the innate immune response. (Microbial infection) Interacts with Lassa virus protein Z. As to quaternary structure, (Microbial infection) Interacts with Mopeia virus protein Z. Phosphorylated in the C-terminal region by CHUK/IKKA leading to NF-kappa-B signaling down-regulation. As to expression, expressed in all tissues tested.

The protein resides in the cytoplasm. It localises to the mitochondrion. Its subcellular location is the preautophagosomal structure. It is found in the cytoplasmic vesicle. The protein localises to the autophagosome. Its function is as follows. Ubiquitin-binding adapter that participates in inflammatory, antiviral and innate immune processes as well as selective autophagy regulation. Plays a key role in the negative regulation of NF-kappa-B and IRF3 signalings by acting as an adapter for the ubiquitin-editing enzyme A20/TNFAIP3 to bind and inactivate its substrates. Disrupts the interactions between the E3 ubiquitin ligase TRAF3 and TBK1/IKBKE to attenuate 'Lys63'-linked polyubiquitination of TBK1 and thereby IFN-beta production. Also recruits A20/TNFAIP3 to ubiquitinated signaling proteins TRAF6 and RIPK1, leading to their deubiquitination and disruption of IL-1 and TNF-induced NF-kappa-B signaling pathways. Inhibits virus-induced apoptosis by inducing the 'Lys-48'-linked polyubiquitination and degradation of MAVS via recruitment of the E3 ligase ITCH, thereby attenuating MAVS-mediated apoptosis signaling. As a macroautophagy/autophagy receptor, facilitates the xenophagic clearance of pathogenic bacteria such as Salmonella typhimurium and Mycobacterium tuberculosis. Upon NBR1 recruitment to the SQSTM1-ubiquitin condensates, acts as the major recruiter of RB1CC1 to these ubiquitin condensates to promote their autophagic degradation. Mediates the autophagic degradation of other substrates including TICAM1. The polypeptide is Tax1-binding protein 1 (TAX1BP1) (Homo sapiens (Human)).